We begin with the raw amino-acid sequence, 115 residues long: Large ribosomal subunit protein bL20 (115 aa).

Belongs to the bacterial ribosomal protein bL20 family.

Functionally, binds directly to 23S ribosomal RNA and is necessary for the in vitro assembly process of the 50S ribosomal subunit. It is not involved in the protein synthesizing functions of that subunit. In Synechococcus sp. (strain CC9605), this protein is Large ribosomal subunit protein bL20.